The primary structure comprises 610 residues: Zinc metalloproteinase-disintegrin-like acurhagin (610 aa).

The signal sequence occupies residues 1 to 20 (MIQVLLVTICLAAFPYQGSS). Residues 21–191 (IILESGDVND…ISQLNLIPEQ (171 aa)) constitute a propeptide that is removed on maturation. Gln192 is modified (pyrrolidone carboxylic acid). The 197-residue stretch at 198–394 (KYVETVVVVD…HNPECIDNEP (197 aa)) folds into the Peptidase M12B domain. Ca(2+) contacts are provided by Glu201 and Asp285. Disulfide bonds link Cys309–Cys389, Cys349–Cys373, and Cys351–Cys356. His334 serves as a coordination point for Zn(2+). Glu335 is a catalytic residue. Residues His338 and His344 each contribute to the Zn(2+) site. N-linked (GlcNAc...) asparagine glycosylation occurs at Asn372. Positions 389, 392, 407, 409, 411, 414, and 417 each coordinate Ca(2+). Positions 402–488 (PPLCGNELLE…ECPADVFHKN (87 aa)) constitute a Disintegrin domain. 14 cysteine pairs are disulfide-bonded: Cys405/Cys434, Cys416/Cys429, Cys418/Cys424, Cys428/Cys451, Cys442/Cys448, Cys447/Cys473, Cys460/Cys480, Cys467/Cys499, Cys492/Cys504, Cys511/Cys561, Cys526/Cys572, Cys539/Cys549, Cys556/Cys598, and Cys592/Cys603. The D/ECD-tripeptide signature appears at 466–468 (ECD). Positions 468, 469, 471, 483, and 484 each coordinate Ca(2+).

The protein belongs to the venom metalloproteinase (M12B) family. P-III subfamily. P-IIIa sub-subfamily. Monomer. Requires Zn(2+) as cofactor. In terms of processing, N-glycosylated. Expressed by the venom gland.

Its subcellular location is the secreted. With respect to regulation, the proteinase activity is slightly enhanced by Ca(2+) and Mg(2+), but is completely inhibited by Zn(2+). Is completely inhibited by phenanthroline and EDTA. Not inhibited by PMSF. Its function is as follows. Snake venom zinc metalloprotease that causes hemorrhage and dose-dependently inhibits platelet aggregation triggered by collagen. This inhibition is due to its binding to glycoprotein VI (GP6) and collagen. The binding to GP6 results in inhibition of the signaling pathway (decrease of tyrosine phosphorylation of signaling proteins such as Syk, LAT, PI3-K and PLCgamma2). Preferentially cleaves alpha chain (FGA) of fibrinogen, followed by beta chain (FGB). Also degrades the extracellular matrix protein fibronectin (FN1), and cleaves collagen and von Willebrand factor (VWF). The chain is Zinc metalloproteinase-disintegrin-like acurhagin from Deinagkistrodon acutus (Hundred-pace snake).